Consider the following 496-residue polypeptide: MEIIIISLCLATILAFLLLKPLLNRTVAKDNLPPSPWRVPVIGNLHQLSLHPHRSLRSLSHRYGPLMLLHFGRVPILVVSSSDVAHDLMKTHDLKVANRPRLKVIETILNGGREVVFSPYGDYWRQIKTVCVVHLLNKKMVQSFAKVREEERSVMMEKVEKASSDSSPLNLSKLLITLTSDVASRVSFGKKHSNEASMSDFKNQVRKITELVGGFPVSEYIPCLAWIDQIRGLYNRAEEVSKIFGDLMDKVVQEHLDATNKPTKDFVDILLSFERQSKDGIEVRRSDIKFIILDIFLGGTTTTNSLLEWTMTELIRHPECMKKLQDEIRGDATNLTIYRSHEEVEDMKYLKAVIKEGLRLHPPFPLLVLRLLTQDVKLKGYDIAAGTQVITNAWAIQRDIVTWGIDAEEFRPERHLDSPLDFRGTNFEYIPFGSGRRICPGIGFAMALVEVTLANLVNRFNWRMDARLSGDEYDLAEATGIDVCRKFPLIVFPSNA.

Residues isoleucine 3–leucine 23 traverse the membrane as a helical segment. A heme-binding site is contributed by cysteine 439.

This sequence belongs to the cytochrome P450 family. It depends on heme as a cofactor.

Its subcellular location is the membrane. The protein is Cytochrome P450 71A15 (CYP71A15) of Arabidopsis thaliana (Mouse-ear cress).